A 179-amino-acid chain; its full sequence is Large ribosomal subunit protein bL25 (179 aa).

Belongs to the bacterial ribosomal protein bL25 family. CTC subfamily. Part of the 50S ribosomal subunit; part of the 5S rRNA/L5/L18/L25 subcomplex. Contacts the 5S rRNA. Binds to the 5S rRNA independently of L5 and L18.

Its function is as follows. This is one of the proteins that binds to the 5S RNA in the ribosome where it forms part of the central protuberance. This chain is Large ribosomal subunit protein bL25, found in Desulfitobacterium hafniense (strain DSM 10664 / DCB-2).